The sequence spans 390 residues: 5-hydroxytryptamine receptor 1B (390 aa).

The Extracellular portion of the chain corresponds to 1–46 (MEEPGAQCAPPXPAGSETWVPQANLSSAPSQNCSAKDYIYQDSIAL). N-linked (GlcNAc...) asparagine glycosylation is found at Asn-24 and Asn-32. A helical membrane pass occupies residues 47-72 (PWKVLLVMLLALITLATTLSNAFVIA). Topologically, residues 73-86 (TVYRTRKLHTPANY) are cytoplasmic. Residues 87-111 (LIASLAVTDLLVSILVMPISTMYTV) form a helical membrane-spanning segment. Residues 112 to 119 (TGRWTLGQ) are Extracellular-facing. Residues 120 to 145 (VVCDFWLSSDITCCTASILHLCVIAL) form a helical membrane-spanning segment. The cysteines at positions 122 and 199 are disulfide-linked. Positions 129 and 134 each coordinate ergotamine. The DRY motif; important for ligand-induced conformation changes and signaling motif lies at 146–148 (DRY). Residues 146-165 (DRYWAITDAVEYSAKRTPKR) are Cytoplasmic-facing. The helical transmembrane segment at 166 to 184 (AAVMIALVWVFSISISLPP) threads the bilayer. At 185-205 (FFWRQAKAEEEVSECVVNTDH) the chain is on the extracellular side. Position 201 (Val-201) interacts with ergotamine. The chain crosses the membrane as a helical span at residues 206 to 229 (ILYTVYSTVGAFYFPTLLLIALYG). Over 230-315 (RIYVEARSRI…AARERKATKT (86 aa)) the chain is Cytoplasmic. The segment covering 259–272 (DSPGSTSSVTSINS) has biased composition (polar residues). Positions 259–281 (DSPGSTSSVTSINSRVPDVPSES) are disordered. The chain crosses the membrane as a helical span at residues 316–337 (LGIILGAFIVCWLPFFIISLVM). Residues 338–347 (PICKDACWFH) are Extracellular-facing. A helical transmembrane segment spans residues 348–370 (LAIFDFFTWLGYLNSLINPIIYT). Residues 365–369 (NPIIY) carry the NPxxY motif; important for ligand-induced conformation changes and signaling motif. The Cytoplasmic portion of the chain corresponds to 371 to 390 (MSNEDFKQAFHKLIRFKCTS). The S-palmitoyl cysteine moiety is linked to residue Cys-388.

It belongs to the G-protein coupled receptor 1 family. As to quaternary structure, homodimer. Heterodimer with HTR1D. Post-translationally, phosphorylated. Desensitization of the receptor may be mediated by its phosphorylation. In terms of processing, palmitoylated.

Its subcellular location is the cell membrane. Its function is as follows. G-protein coupled receptor for 5-hydroxytryptamine (serotonin). Also functions as a receptor for ergot alkaloid derivatives, various anxiolytic and antidepressant drugs and other psychoactive substances, such as lysergic acid diethylamide (LSD). Ligand binding causes a conformation change that triggers signaling via guanine nucleotide-binding proteins (G proteins) and modulates the activity of downstream effectors, such as adenylate cyclase. HTR1B is coupled to G(i)/G(o) G alpha proteins and mediates inhibitory neurotransmission by inhibiting adenylate cyclase activity. Arrestin family members inhibit signaling via G proteins and mediate activation of alternative signaling pathways. Regulates the release of 5-hydroxytryptamine, dopamine and acetylcholine in the brain, and thereby affects neural activity, nociceptive processing, pain perception, mood and behavior. Besides, plays a role in vasoconstriction of cerebral arteries. The polypeptide is 5-hydroxytryptamine receptor 1B (HTR1B) (Gorilla gorilla gorilla (Western lowland gorilla)).